Here is a 118-residue protein sequence, read N- to C-terminus: Small ribosomal subunit protein uS13 (118 aa).

The interval 93–118 is disordered; it reads RGLPVRGQRTKTNARTRKGPRKPIRK.

Belongs to the universal ribosomal protein uS13 family. In terms of assembly, part of the 30S ribosomal subunit. Forms a loose heterodimer with protein S19. Forms two bridges to the 50S subunit in the 70S ribosome.

Its function is as follows. Located at the top of the head of the 30S subunit, it contacts several helices of the 16S rRNA. In the 70S ribosome it contacts the 23S rRNA (bridge B1a) and protein L5 of the 50S subunit (bridge B1b), connecting the 2 subunits; these bridges are implicated in subunit movement. Contacts the tRNAs in the A and P-sites. The sequence is that of Small ribosomal subunit protein uS13 from Pseudomonas fluorescens (strain Pf0-1).